The chain runs to 411 residues: Glutamate dehydrogenase A (411 aa).

K102 is a catalytic residue.

This sequence belongs to the Glu/Leu/Phe/Val dehydrogenases family.

The enzyme catalyses L-glutamate + NAD(+) + H2O = 2-oxoglutarate + NH4(+) + NADH + H(+). The catalysed reaction is L-glutamate + NADP(+) + H2O = 2-oxoglutarate + NH4(+) + NADPH + H(+). In Nicotiana plumbaginifolia (Leadwort-leaved tobacco), this protein is Glutamate dehydrogenase A (GDHA).